Here is a 65-residue protein sequence, read N- to C-terminus: Large ribosomal subunit protein bL35 (65 aa).

Residues 23 to 44 (KRMKAGKQHILTKKSQKTKRNL) form a disordered region.

This sequence belongs to the bacterial ribosomal protein bL35 family.

This is Large ribosomal subunit protein bL35 from Lachnoclostridium phytofermentans (strain ATCC 700394 / DSM 18823 / ISDg) (Clostridium phytofermentans).